Consider the following 326-residue polypeptide: Adenosine receptor A1 (326 aa).

Residues 1–10 (MPPYISAFQA) are Extracellular-facing. Residues 11–33 (AYIGIEVLIALVSVPGNVLVIWA) form a helical membrane-spanning segment. The Cytoplasmic portion of the chain corresponds to 34–46 (VKVNQALRDATFC). The helical transmembrane segment at 47–69 (FIVSLAVADVAVGALVIPLAILI) threads the bilayer. At 70–80 (NIGPQTYFHTC) the chain is on the extracellular side. A disulfide bridge connects residues Cys-80 and Cys-169. A helical membrane pass occupies residues 81–102 (LMVACPVLILTQSSILALLAIA). Residues 103–123 (VDRYLRVKIPLRYKTVVTQRR) lie on the Cytoplasmic side of the membrane. Residues 124–146 (AAVAIAGCWILSLVVGLTPMFGW) form a helical membrane-spanning segment. Over 147-176 (NNLSVVEQDWRANGSVGEPVIKCEFEKVIS) the chain is Extracellular. N-linked (GlcNAc...) asparagine glycosylation is found at Asn-148 and Asn-159. The helical transmembrane segment at 177–201 (MEYMVYFNFFVWVLPPLLLMVLIYL) threads the bilayer. At 202–235 (EVFYLIRKQLNKKVSASSGDPQKYYGKELKIAKS) the chain is on the cytoplasmic side. Residues 236 to 259 (LALILFLFALSWLPLHILNCITLF) traverse the membrane as a helical segment. Residues 260 to 267 (CPTCQKPS) lie on the Extracellular side of the membrane. A helical membrane pass occupies residues 268–292 (ILIYIAIFLTHGNSAMNPIVYAFRI). Residues 293 to 326 (HKFRVTFLKIWNDHFRCQPKPPIDEDLPEEKAED) are Cytoplasmic-facing. Cys-309 carries S-palmitoyl cysteine lipidation.

The protein belongs to the G-protein coupled receptor 1 family. Widely expressed in brain and spinal cord.

The protein resides in the cell membrane. Its function is as follows. Receptor for adenosine. The activity of this receptor is mediated by G proteins which inhibit adenylyl cyclase. The chain is Adenosine receptor A1 (Adora1) from Rattus norvegicus (Rat).